The primary structure comprises 410 residues: Na(+)/H(+) antiporter NhaS4 (410 aa).

Transmembrane regions (helical) follow at residues 7-27 (LLILANIIVIIGLARLIGLLF), 33-53 (PPVIGEIIAGIMLGPSLLGLL), 69-89 (FLYLLSEIGLIFYMFLVGLEL), 107-127 (VSIFFPFVLGIVLSFFVLYSL), 135-155 (FIPFALFIGAAMSITAFPVLA), 173-193 (LTCASVDDISAWCLLAIAIAV), 199-219 (IFGAFPTLLGIIVYTVFMVTL), 241-261 (LLTFIYIMVILSAMLTEWIGI), 291-311 (FVSTFLLPIFFAYSGLSTDLG), 319-339 (WAVCALVVAAAIAGKYCGVYV), and 376-396 (GVISPVIFTMFVIMAIITTII).

This sequence belongs to the monovalent cation:proton antiporter 2 (CPA2) transporter (TC 2.A.37) family.

It localises to the membrane. Its function is as follows. Na(+)/H(+) antiporter. This Synechocystis sp. (strain ATCC 27184 / PCC 6803 / Kazusa) protein is Na(+)/H(+) antiporter NhaS4 (nhaS4).